A 365-amino-acid polypeptide reads, in one-letter code: Ribosomal RNA large subunit methyltransferase F (365 aa).

Residues 1-48 are disordered; the sequence is MSKPAVKSVQSATAKTATRAVNIRQKVKAPKQAKPEGKGSTKPVKDRP. A compositionally biased stretch (basic and acidic residues) spans 33–48; the sequence is AKPEGKGSTKPVKDRP.

It belongs to the methyltransferase superfamily. METTL16/RlmF family.

It is found in the cytoplasm. The catalysed reaction is adenosine(1618) in 23S rRNA + S-adenosyl-L-methionine = N(6)-methyladenosine(1618) in 23S rRNA + S-adenosyl-L-homocysteine + H(+). In terms of biological role, specifically methylates the adenine in position 1618 of 23S rRNA. The chain is Ribosomal RNA large subunit methyltransferase F from Shewanella baltica (strain OS223).